Consider the following 381-residue polypeptide: MSCFGGGVEDDRTKEQKRQNKLIDQQLKKDKKAYRALHRLLLLGAGESGKSTVVKQMKILHKDGFSDEERKEKLVDIKSNIRDIVVTVTKAMSELDPPVSLGSPENEEHLQYLWSDEVTRKDYDYPEKFFEAVSKVWNDSGVQTCSARSNEYQLIDSAAYFMASEKQAQLKEPNYIPNDQDILRCRVLTSGIFETRFVVDKVHFYMFGVGGQRIERRKWIQCFNDVTAIIFVVACSSFNMVIREDLYTNRLRESLDLFEQIWNNRWLRTVSIILFLNKQDILKEKIDAGKRVENYFLEFNSYRPPDNLDLSKEPPGSSSTFLKARYFFRDMFLRITNKSHDGRHFCYPHFTTAVDTENIRRVFDSCRDIIQRMHLQKYELL.

Residue Cys3 is the site of S-palmitoyl cysteine attachment. In terms of domain architecture, G-alpha spans 36-381; the sequence is ALHRLLLLGA…RMHLQKYELL (346 aa). Residues 39–52 are G1 motif; it reads RLLLLGAGESGKST. Residues 44–51, 183–189, 208–212, 277–280, and Ala353 contribute to the GTP site; these read GAGESGKS, LRCRVLT, GVGGQ, and NKQD. Ser51 and Thr189 together coordinate Mg(2+). The segment at 181-189 is G2 motif; the sequence is DILRCRVLT. The interval 204-213 is G3 motif; the sequence is FYMFGVGGQR. A G4 motif region spans residues 273–280; the sequence is ILFLNKQD. The segment at 351-356 is G5 motif; sequence TTAVDT.

The protein belongs to the G-alpha family. G(s) subfamily. G proteins are composed of 3 units; alpha, beta and gamma. The alpha chain contains the guanine nucleotide binding site.

In terms of biological role, guanine nucleotide-binding proteins (G proteins) are involved as modulators or transducers in various transmembrane signaling systems. The G(s) protein is involved in hormonal regulation of adenylate cyclase: it activates the cyclase in response to beta-adrenergic stimuli. In Geodia cydonium (Sponge), this protein is Guanine nucleotide-binding protein G(s) subunit alpha.